A 436-amino-acid chain; its full sequence is Testican-3 (436 aa).

The N-terminal stretch at 1–21 (MLKVSAVLCVCAAAWCSQSLA) is a signal peptide. 8 disulfide bridges follow: Cys-90/Cys-101, Cys-95/Cys-111, Cys-139/Cys-169, Cys-142/Cys-162, Cys-151/Cys-183, Cys-317/Cys-341, Cys-352/Cys-359, and Cys-361/Cys-380. The Kazal-like domain occupies 133–185 (GPILSTCKQCPVVYPSPVCGSDGHTYSFQCKLEYQACVLGKQISVKCEGHCPC). Residues 314 to 380 (DPPCQTELSN…GSRINGVADC (67 aa)) enclose the Thyroglobulin type-1 domain. Ser-387 and Ser-392 each carry an O-linked (Xyl...) (glycosaminoglycan) serine glycan. Residues 393-436 (GDFHEWTDDEDDEDDIMNDEDEIEDDDEDEGDDDDGGDDHDVYI) are disordered. Acidic residues predominate over residues 399 to 430 (TDDEDDEDDIMNDEDEIEDDDEDEGDDDDGGD).

Post-translationally, contains chondroitin sulfate and heparan sulfate O-linked oligosaccharides. As to expression, expressed in brain.

The protein localises to the secreted. It is found in the extracellular space. It localises to the extracellular matrix. Its function is as follows. May participate in diverse steps of neurogenesis. Inhibits the processing of pro-matrix metalloproteinase 2 (MMP-2) by MT1-MMP and MT3-MMP. May interfere with tumor invasion. This chain is Testican-3 (SPOCK3), found in Homo sapiens (Human).